The sequence spans 346 residues: Phosphoribosylformylglycinamidine cyclo-ligase (346 aa).

It belongs to the AIR synthase family.

It is found in the cytoplasm. The catalysed reaction is 2-formamido-N(1)-(5-O-phospho-beta-D-ribosyl)acetamidine + ATP = 5-amino-1-(5-phospho-beta-D-ribosyl)imidazole + ADP + phosphate + H(+). It functions in the pathway purine metabolism; IMP biosynthesis via de novo pathway; 5-amino-1-(5-phospho-D-ribosyl)imidazole from N(2)-formyl-N(1)-(5-phospho-D-ribosyl)glycinamide: step 2/2. This chain is Phosphoribosylformylglycinamidine cyclo-ligase, found in Prochlorococcus marinus (strain NATL1A).